Reading from the N-terminus, the 313-residue chain is MTVPNDDTWGPATSVGTTATMAAAARAIATRDGVINDPFAEPLVRAVGVNFLTRWAIGELVASDVDVEGSPWGLAQMPAAIAARTRYFDEFYADAAAAGIRQAVILASGLDTRAYRLDWPAGMTVFEIDQPAVVEFKTTALARLAAEPKADLRTVAVDLRDDWSTALATAGLDSSKPTAWIAEGLFGYLAPEAQDRLLDAVTALSTPGSRLGSEAVPDTADMDPHAARQRMRAATAKWRDHGFELDVDVISFAGERHDVGAYLQALGWTTVATPMAELLADQGLPAIARADDDRQTMNGVTYYTSTLGTGRQR.

Residues Asp129 and 158-159 (DL) contribute to the S-adenosyl-L-methionine site.

It belongs to the UPF0677 family.

Exhibits S-adenosyl-L-methionine-dependent methyltransferase activity. This chain is Putative S-adenosyl-L-methionine-dependent methyltransferase MAV_4573, found in Mycobacterium avium (strain 104).